The sequence spans 138 residues: MRTLWIVAVCLIGVEGNLFQFARMINGKLGAFSVWNYISYGCYCGWGGQGTPKDATDRCCFVHDCCYGGVKGCNPKLAIYSYSFQRGNIVCGRNNGCLRTICECDRVAANCFHQNKNTYNKEYKFLSSSKCRQRSEQC.

Residues 1-16 (MRTLWIVAVCLIGVEG) form the signal peptide. Disulfide bonds link Cys42–Cys131, Cys44–Cys60, Cys59–Cys111, Cys65–Cys138, Cys66–Cys104, Cys73–Cys97, and Cys91–Cys102. The Ca(2+) site is built by Tyr43, Gly45, and Gly47. His63 is a catalytic residue. Ca(2+) is bound at residue Asp64. Asp105 is an active-site residue.

This sequence belongs to the phospholipase A2 family. Group II subfamily. D49 sub-subfamily. As to quaternary structure, heterodimer of a weakly toxic basic protein having phospholipase A2 activity (RV-4) and a non-toxic acidic protein which inhibits its enzymatic activity but potentiates its lethal potency and neurotoxicity (RV-7). It depends on Ca(2+) as a cofactor. Expressed by the venom gland.

The protein localises to the secreted. It carries out the reaction a 1,2-diacyl-sn-glycero-3-phosphocholine + H2O = a 1-acyl-sn-glycero-3-phosphocholine + a fatty acid + H(+). In terms of biological role, heterodimer RV-4/RV-7: acts as a presynaptic neurotoxin. Monomer: snake venom phospholipase A2 (PLA2) that acts as a presynaptic neurotoxin. PLA2 catalyzes the calcium-dependent hydrolysis of the 2-acyl groups in 3-sn-phosphoglycerides. The polypeptide is Basic phospholipase A2 RV-4 (Daboia siamensis (Eastern Russel's viper)).